The primary structure comprises 342 residues: Olfactory receptor 51F2 (342 aa).

Over 1–39 (MTETSLSSQCFPMSVLNNTIAEPLIFLLMGIPGLKATQY) the chain is Extracellular. N17 carries an N-linked (GlcNAc...) asparagine glycan. A helical membrane pass occupies residues 40–60 (WISIPFCLLYVVAVSGNSMIL). Residues 61-68 (FVVLCERS) lie on the Cytoplasmic side of the membrane. A helical membrane pass occupies residues 69–89 (LHKPMYYFLSMLSATDLSLSL). The Extracellular segment spans residues 90 to 113 (CTLSTTLGVFWFEAREINLNACIA). A disulfide bridge links C111 with C203. A helical membrane pass occupies residues 114–134 (QMFFLHGFTFMESGVLLAMAF). The Cytoplasmic segment spans residues 135–153 (DRFVAICYPLRYTTILTNA). The helical transmembrane segment at 154-174 (RIAKIGMSMLIRNVAVMLPVM) threads the bilayer. Over 175-210 (LFVKRLSFCSSMVLSHSYCYHVDLIQLSCTDNRINS) the chain is Extracellular. The helical transmembrane segment at 211-231 (ILGLFALLSTTGFDCPCILLS) threads the bilayer. Residues 232 to 251 (YILIIRSVLSIASSEERRKA) are Cytoplasmic-facing. The chain crosses the membrane as a helical span at residues 252–272 (FNTCTSHISAVSIFYLPLISL). Residues 273–287 (SLVHRYGHSAPPFVH) are Extracellular-facing. The helical transmembrane segment at 288 to 308 (IIMANVFLLIPPVLNPIIYSV) threads the bilayer. The Cytoplasmic segment spans residues 309 to 342 (KIKQIQKAIIKVLIQKHSKSNHQLFLIRDKAIYE).

This sequence belongs to the G-protein coupled receptor 1 family.

It localises to the cell membrane. Functionally, odorant receptor. The protein is Olfactory receptor 51F2 (OR51F2) of Homo sapiens (Human).